We begin with the raw amino-acid sequence, 516 residues long: Replication factor C large subunit (516 aa).

44 to 51 serves as a coordination point for ATP; the sequence is GAPGVGKT. The interval 421–516 is disordered; that stretch reads RSEAVEAHAG…DGQAGLSEFM (96 aa). Basic and acidic residues predominate over residues 454–467; sequence VQSHKSAESGDDTV. Residues 479–496 are compositionally biased toward low complexity; the sequence is QSGASETASATESASDSD. The segment covering 497-508 has biased composition (acidic residues); that stretch reads ASTDTDADDDDG.

This sequence belongs to the activator 1 small subunits family. RfcL subfamily. Heteromultimer composed of small subunits (RfcS) and large subunits (RfcL).

Its function is as follows. Part of the RFC clamp loader complex which loads the PCNA sliding clamp onto DNA. This chain is Replication factor C large subunit, found in Haloquadratum walsbyi (strain DSM 16790 / HBSQ001).